Consider the following 193-residue polypeptide: Ion-translocating oxidoreductase complex subunit A (193 aa).

Helical transmembrane passes span Ile-5 to Leu-25, Ile-39 to Val-59, Leu-72 to Ile-92, Leu-102 to Leu-122, Val-134 to Leu-154, and Ser-171 to Val-191.

It belongs to the NqrDE/RnfAE family. In terms of assembly, the complex is composed of six subunits: RnfA, RnfB, RnfC, RnfD, RnfE and RnfG.

The protein resides in the cell inner membrane. Part of a membrane-bound complex that couples electron transfer with translocation of ions across the membrane. The polypeptide is Ion-translocating oxidoreductase complex subunit A (Histophilus somni (strain 2336) (Haemophilus somnus)).